A 201-amino-acid chain; its full sequence is Recombination protein RecR (201 aa).

A C4-type zinc finger spans residues 57–72 (CADCRTFTEQEKCNIC). The Toprim domain maps to 81–176 (GQICVVESPA…DASRIAHGVP (96 aa)).

It belongs to the RecR family.

In terms of biological role, may play a role in DNA repair. It seems to be involved in an RecBC-independent recombinational process of DNA repair. It may act with RecF and RecO. This Cronobacter sakazakii (strain ATCC BAA-894) (Enterobacter sakazakii) protein is Recombination protein RecR.